Consider the following 882-residue polypeptide: Liprin-beta-2 (882 aa).

Residues 101–303 (AASNETYQER…DKDRRIEELT (203 aa)) adopt a coiled-coil conformation. Phosphoserine occurs at positions 328, 362, and 386. Residues 339 to 554 (RKWNTTNKSP…SRTRDTKGQK (216 aa)) form a disordered region. The span at 388 to 399 (EDLRRESGDKCV) shows a compositional bias: basic and acidic residues. 2 stretches are compositionally biased toward polar residues: residues 442–457 (PTASLQPDSSGSSQPK) and 481–495 (SSASSGTESSPQSPV). Residues S502 and S518 each carry the phosphoserine modification. Over residues 502–515 (SPKGIKKFWGKIRR) the composition is skewed to basic residues. 3 SAM domains span residues 564–628 (WSTE…INAK), 636–699 (LDHI…LHVN), and 724–789 (WSNH…KFNA).

This sequence belongs to the liprin family. Liprin-beta subfamily. As to quaternary structure, forms homodimers and heterodimers. As to expression, expressed widely. Strong expression in liver, kidney, intestine, heart, lung and testis. Low expression in brain and thymus.

Its function is as follows. May regulate the disassembly of focal adhesions. Did not bind receptor-like tyrosine phosphatases type 2A. This is Liprin-beta-2 (Ppfibp2) from Mus musculus (Mouse).